The primary structure comprises 175 residues: Protein-export protein SecB (175 aa).

The disordered stretch occupies residues 154-175 (QQGGNNNGSDSGIILPPGTTRQ).

The protein belongs to the SecB family. As to quaternary structure, homotetramer, a dimer of dimers. One homotetramer interacts with 1 SecA dimer.

The protein resides in the cytoplasm. Functionally, one of the proteins required for the normal export of preproteins out of the cell cytoplasm. It is a molecular chaperone that binds to a subset of precursor proteins, maintaining them in a translocation-competent state. It also specifically binds to its receptor SecA. The chain is Protein-export protein SecB from Bordetella petrii (strain ATCC BAA-461 / DSM 12804 / CCUG 43448).